The primary structure comprises 252 residues: tRNA (guanine-N(1)-)-methyltransferase (252 aa).

S-adenosyl-L-methionine is bound by residues G113 and I133–L138.

This sequence belongs to the RNA methyltransferase TrmD family. In terms of assembly, homodimer.

The protein localises to the cytoplasm. The enzyme catalyses guanosine(37) in tRNA + S-adenosyl-L-methionine = N(1)-methylguanosine(37) in tRNA + S-adenosyl-L-homocysteine + H(+). Its function is as follows. Specifically methylates guanosine-37 in various tRNAs. The chain is tRNA (guanine-N(1)-)-methyltransferase from Xanthomonas campestris pv. campestris (strain B100).